Consider the following 401-residue polypeptide: Argininosuccinate synthase (401 aa).

9–17 (AYSGGLDTS) is an ATP binding site. Tyr86 serves as a coordination point for L-citrulline. Gly116 contributes to the ATP binding site. Thr118, Asn122, and Asp123 together coordinate L-aspartate. Position 122 (Asn122) interacts with L-citrulline. The L-citrulline site is built by Arg126, Ser174, Ser183, Glu259, and Tyr271.

The protein belongs to the argininosuccinate synthase family. Type 1 subfamily. Homotetramer.

The protein resides in the cytoplasm. It catalyses the reaction L-citrulline + L-aspartate + ATP = 2-(N(omega)-L-arginino)succinate + AMP + diphosphate + H(+). It participates in amino-acid biosynthesis; L-arginine biosynthesis; L-arginine from L-ornithine and carbamoyl phosphate: step 2/3. In Bacillus cereus (strain Q1), this protein is Argininosuccinate synthase.